A 688-amino-acid chain; its full sequence is G protein-coupled receptor kinase 3 (688 aa).

The N-terminal stretch occupies residues 1 to 190 (MADLEAVLAD…ELNIHLSMND (190 aa)). The 122-residue stretch at 54 to 175 (TFDKIFNQKI…MESDKFTRFC (122 aa)) folds into the RGS domain. One can recognise a Protein kinase domain in the interval 191-453 (FSVHRIIGRG…ARELKEHIFF (263 aa)). ATP-binding positions include 197 to 205 (IGRGGFGEV) and Lys220. Catalysis depends on Asp317, which acts as the Proton acceptor. In terms of domain architecture, AGC-kinase C-terminal spans 454–521 (KGIDWQHVYL…VISERWQQEV (68 aa)). Positions 558-652 (DCIMHGYMLK…WLKELTCTFN (95 aa)) constitute a PH domain.

The protein belongs to the protein kinase superfamily. AGC Ser/Thr protein kinase family. GPRK subfamily. As to quaternary structure, interacts with GIT1. In terms of processing, ubiquitinated.

The protein resides in the postsynapse. Its subcellular location is the presynapse. It carries out the reaction [beta-adrenergic receptor] + ATP = [beta-adrenergic receptor]-phosphate + ADP + H(+). Specifically phosphorylates the agonist-occupied form of the beta-adrenergic and closely related receptors. The sequence is that of G protein-coupled receptor kinase 3 from Mus musculus (Mouse).